The following is a 692-amino-acid chain: ATP-dependent DNA helicase DinG (692 aa).

Residues 16-293 (NLGNQLDNFI…AELAEYKKAA (278 aa)) enclose the Helicase ATP-binding domain. An ATP-binding site is contributed by 56-63 (AGTGIGKS). C123 is a [4Fe-4S] cluster binding site. The DEAH box signature appears at 134–137 (NNDQ). Residues C192 and C202 each contribute to the [4Fe-4S] cluster site. Residues 247-250 (DEAH) carry the DEAH box motif. Positions 514–692 (LIKTLPEYLE…PPFKRVIEYS (179 aa)) constitute a Helicase C-terminal domain.

Belongs to the helicase family. DinG subfamily. Type 1 sub-subfamily. [4Fe-4S] cluster serves as cofactor.

The enzyme catalyses Couples ATP hydrolysis with the unwinding of duplex DNA at the replication fork by translocating in the 5'-3' direction. This creates two antiparallel DNA single strands (ssDNA). The leading ssDNA polymer is the template for DNA polymerase III holoenzyme which synthesizes a continuous strand.. The catalysed reaction is ATP + H2O = ADP + phosphate + H(+). DNA-dependent ATPase and 5'-3' DNA helicase. Unwinds D-loops, R-loops, forked DNA and G-quadruplex DNA. This chain is ATP-dependent DNA helicase DinG, found in Photobacterium profundum (strain SS9).